We begin with the raw amino-acid sequence, 293 residues long: 33 kDa chaperonin (293 aa).

2 disulfides stabilise this stretch: C238/C240 and C271/C274.

The protein belongs to the HSP33 family. Post-translationally, under oxidizing conditions two disulfide bonds are formed involving the reactive cysteines. Under reducing conditions zinc is bound to the reactive cysteines and the protein is inactive.

The protein localises to the cytoplasm. Its function is as follows. Redox regulated molecular chaperone. Protects both thermally unfolding and oxidatively damaged proteins from irreversible aggregation. Plays an important role in the bacterial defense system toward oxidative stress. The chain is 33 kDa chaperonin from Staphylococcus epidermidis (strain ATCC 35984 / DSM 28319 / BCRC 17069 / CCUG 31568 / BM 3577 / RP62A).